A 983-amino-acid polypeptide reads, in one-letter code: Envelope glycoprotein gp160 (983 aa).

Over residues 1 to 20 (MASKESKPSRTTRRGMEPPL) the composition is skewed to basic and acidic residues. A disordered region spans residues 1–22 (MASKESKPSRTTRRGMEPPLRE). A signal peptide spans 1–106 (MASKESKPSR…CLMWEVRKGN (106 aa)). Residues 107-832 (QCQAEEVIAL…WSSWFSWLKY (726 aa)) are Extracellular-facing. N-linked (GlcNAc...) asparagine; by host glycans are attached at residues Asn140, Asn161, Asn206, Asn258, Asn298, Asn364, Asn381, Asn387, Asn403, Asn414, Asn435, Asn439, Asn470, Asn475, Asn481, Asn491, Asn501, Asn515, Asn527, Asn537, Asn542, Asn543, and Asn568. Residues 657–677 (GIGLVIVLAIMAIIAAAGAGL) form a fusion peptide region. Positions 689 to 739 (RTAVQSLANATAAQQEVLEASYAMVQHIAKGIRILEARVARVEALVDRMMV) form a coiled coil. An N-linked (GlcNAc...) asparagine; by host glycan is attached at Asn697. The tract at residues 723 to 739 (LEARVARVEALVDRMMV) is immunosuppression. N-linked (GlcNAc...) asparagine; by host glycans are attached at residues Asn765, Asn772, Asn788, and Asn822. The stretch at 780–815 (EEIEQHEGNLSLLLREAALQVHIAQRDARRIPDAWK) forms a coiled coil. The helical transmembrane segment at 833 to 853 (IPWIIMGIVGLMCFRILMCVI) threads the bilayer. The Cytoplasmic segment spans residues 854-983 (SMCLQAYKQV…PTLENDYVEL (130 aa)). Cys856 carries the S-palmitoyl cysteine; by host lipid modification.

As to quaternary structure, the mature envelope protein (Env) consists of a trimer of SU-TM heterodimers attached by noncovalent interactions or by a labile interchain disulfide bond. In terms of processing, specific enzymatic cleavages in vivo yield mature proteins. Envelope glycoproteins are synthesized as an inactive precursor that is N-glycosylated and processed likely by host cell furin or by a furin-like protease in the Golgi to yield the mature SU and TM proteins. The cleavage site between SU and TM requires the minimal sequence [KR]-X-[KR]-R. Post-translationally, the transmembrane protein is palmitoylated.

The protein resides in the virion membrane. It localises to the host cell membrane. The surface protein (SU) attaches the virus to the host cell by binding to its receptor. This interaction triggers the refolding of the transmembrane protein (TM) and is thought to activate its fusogenic potential by unmasking its fusion peptide. Fusion occurs at the host cell plasma membrane. Functionally, the transmembrane protein (TM) acts as a class I viral fusion protein. Under the current model, the protein has at least 3 conformational states: pre-fusion native state, pre-hairpin intermediate state, and post-fusion hairpin state. During viral and target cell membrane fusion, the coiled coil regions (heptad repeats) assume a trimer-of-hairpins structure, positioning the fusion peptide in close proximity to the C-terminal region of the ectodomain. The formation of this structure appears to drive apposition and subsequent fusion of viral and target cell membranes. Membranes fusion leads to delivery of the nucleocapsid into the cytoplasm. In Maedi visna virus (strain KV1772) (MVV), this protein is Envelope glycoprotein gp160 (env).